The following is a 668-amino-acid chain: L-type lectin-domain containing receptor kinase I.7 (668 aa).

Residues Met1–Gln21 form the signal peptide. Residues Gln22–Pro285 are Extracellular-facing. The interval Thr24–Ser256 is legume-lectin like. Residues Asn56, Asn125, Asn167, Asn201, and Asn223 are each glycosylated (N-linked (GlcNAc...) asparagine). Residues Val286 to Tyr306 traverse the membrane as a helical segment. The Cytoplasmic portion of the chain corresponds to Leu307 to Arg668. A Protein kinase domain is found at Phe341–Phe620. ATP contacts are provided by residues Leu347 to Val355 and Lys372. Catalysis depends on Asp468, which acts as the Proton acceptor.

This sequence in the C-terminal section; belongs to the protein kinase superfamily. Ser/Thr protein kinase family. In the N-terminal section; belongs to the leguminous lectin family.

The protein resides in the cell membrane. It catalyses the reaction L-seryl-[protein] + ATP = O-phospho-L-seryl-[protein] + ADP + H(+). The catalysed reaction is L-threonyl-[protein] + ATP = O-phospho-L-threonyl-[protein] + ADP + H(+). In terms of biological role, involved in resistance response to the pathogenic oomycetes Phytophthora infestans and Phytophthora capsici. The sequence is that of L-type lectin-domain containing receptor kinase I.7 from Arabidopsis thaliana (Mouse-ear cress).